A 206-amino-acid polypeptide reads, in one-letter code: Type III pantothenate kinase (206 aa).

5-12 (DIGNSTAK) provides a ligand contact to ATP. Substrate is bound by residues Tyr67 and 72–75 (GVDR). Asp74 functions as the Proton acceptor in the catalytic mechanism. Asp89 lines the K(+) pocket. Ser92 is a binding site for ATP. Thr144 is a binding site for substrate.

Belongs to the type III pantothenate kinase family. As to quaternary structure, homodimer. NH4(+) serves as cofactor. It depends on K(+) as a cofactor.

The protein resides in the cytoplasm. The catalysed reaction is (R)-pantothenate + ATP = (R)-4'-phosphopantothenate + ADP + H(+). Its pathway is cofactor biosynthesis; coenzyme A biosynthesis; CoA from (R)-pantothenate: step 1/5. Catalyzes the phosphorylation of pantothenate (Pan), the first step in CoA biosynthesis. The chain is Type III pantothenate kinase from Campylobacter hominis (strain ATCC BAA-381 / DSM 21671 / CCUG 45161 / LMG 19568 / NCTC 13146 / CH001A).